We begin with the raw amino-acid sequence, 199 residues long: dITP/XTP pyrophosphatase (199 aa).

7–12 (SNNPGK) is a substrate binding site. The active-site Proton acceptor is Asp-68. Asp-68 lines the Mg(2+) pocket. Residues Ala-69, 154–157 (FGFD), Lys-177, and 182–183 (HR) each bind substrate.

This sequence belongs to the HAM1 NTPase family. As to quaternary structure, homodimer. It depends on Mg(2+) as a cofactor.

The catalysed reaction is XTP + H2O = XMP + diphosphate + H(+). It carries out the reaction dITP + H2O = dIMP + diphosphate + H(+). The enzyme catalyses ITP + H2O = IMP + diphosphate + H(+). In terms of biological role, pyrophosphatase that catalyzes the hydrolysis of nucleoside triphosphates to their monophosphate derivatives, with a high preference for the non-canonical purine nucleotides XTP (xanthosine triphosphate), dITP (deoxyinosine triphosphate) and ITP. Seems to function as a house-cleaning enzyme that removes non-canonical purine nucleotides from the nucleotide pool, thus preventing their incorporation into DNA/RNA and avoiding chromosomal lesions. This is dITP/XTP pyrophosphatase from Verminephrobacter eiseniae (strain EF01-2).